A 739-amino-acid chain; its full sequence is Catalase-peroxidase 1 (739 aa).

The tract at residues methionine 1–lysine 33 is disordered. Positions tryptophan 113–tyrosine 236 form a cross-link, tryptophyl-tyrosyl-methioninium (Trp-Tyr) (with M-262). Histidine 114 acts as the Proton acceptor in catalysis. The segment at residues tyrosine 236–methionine 262 is a cross-link (tryptophyl-tyrosyl-methioninium (Tyr-Met) (with W-113)). Histidine 277 is a heme b binding site.

Belongs to the peroxidase family. Peroxidase/catalase subfamily. Homodimer or homotetramer. Heme b is required as a cofactor. In terms of processing, formation of the three residue Trp-Tyr-Met cross-link is important for the catalase, but not the peroxidase activity of the enzyme.

It catalyses the reaction H2O2 + AH2 = A + 2 H2O. The enzyme catalyses 2 H2O2 = O2 + 2 H2O. Bifunctional enzyme with both catalase and broad-spectrum peroxidase activity. May play a role in the intracellular survival of mycobacteria. The protein is Catalase-peroxidase 1 of Mycolicibacterium smegmatis (strain ATCC 700084 / mc(2)155) (Mycobacterium smegmatis).